A 429-amino-acid chain; its full sequence is Histidinol dehydrogenase (429 aa).

Residues Y130, Q191, and N214 each coordinate NAD(+). Positions 237, 259, and 262 each coordinate substrate. Zn(2+) contacts are provided by Q259 and H262. Catalysis depends on proton acceptor residues E327 and H328. Substrate-binding residues include H328, D361, E415, and H420. Residue D361 participates in Zn(2+) binding. Residue H420 participates in Zn(2+) binding.

Belongs to the histidinol dehydrogenase family. The cofactor is Zn(2+).

It catalyses the reaction L-histidinol + 2 NAD(+) + H2O = L-histidine + 2 NADH + 3 H(+). It participates in amino-acid biosynthesis; L-histidine biosynthesis; L-histidine from 5-phospho-alpha-D-ribose 1-diphosphate: step 9/9. Its function is as follows. Catalyzes the sequential NAD-dependent oxidations of L-histidinol to L-histidinaldehyde and then to L-histidine. The sequence is that of Histidinol dehydrogenase from Neisseria gonorrhoeae (strain ATCC 700825 / FA 1090).